The primary structure comprises 455 residues: Ribulose bisphosphate carboxylase large chain (455 aa).

Lys-5 is subject to N6,N6,N6-trimethyllysine. Asn-114 and Thr-164 together coordinate substrate. The active-site Proton acceptor is the Lys-166. Lys-168 contacts substrate. Lys-192, Asp-194, and Glu-195 together coordinate Mg(2+). The residue at position 192 (Lys-192) is an N6-carboxylysine. Catalysis depends on His-285, which acts as the Proton acceptor. Substrate is bound by residues Arg-286, His-318, and Ser-370.

This sequence belongs to the RuBisCO large chain family. Type I subfamily. In terms of assembly, heterohexadecamer of 8 large chains and 8 small chains; disulfide-linked. The disulfide link is formed within the large subunit homodimers. It depends on Mg(2+) as a cofactor. In terms of processing, the disulfide bond which can form in the large chain dimeric partners within the hexadecamer appears to be associated with oxidative stress and protein turnover.

Its subcellular location is the plastid. The protein resides in the chloroplast. It catalyses the reaction 2 (2R)-3-phosphoglycerate + 2 H(+) = D-ribulose 1,5-bisphosphate + CO2 + H2O. It carries out the reaction D-ribulose 1,5-bisphosphate + O2 = 2-phosphoglycolate + (2R)-3-phosphoglycerate + 2 H(+). In terms of biological role, ruBisCO catalyzes two reactions: the carboxylation of D-ribulose 1,5-bisphosphate, the primary event in carbon dioxide fixation, as well as the oxidative fragmentation of the pentose substrate in the photorespiration process. Both reactions occur simultaneously and in competition at the same active site. The chain is Ribulose bisphosphate carboxylase large chain from Lupinus luteus (European yellow lupine).